The sequence spans 406 residues: L-methionine gamma-lyase (406 aa).

Residues 76 to 78 (YQR) and 106 to 107 (GM) each bind pyridoxal 5'-phosphate. Tyrosine 132 is an L-homocysteine binding site. 219–221 (SAT) contributes to the pyridoxal 5'-phosphate binding site. Lysine 222 bears the N6-(pyridoxal phosphate)lysine mark. Arginine 380 contacts L-homocysteine. Arginine 380 contributes to the L-methionine binding site.

It belongs to the trans-sulfuration enzymes family. L-methionine gamma-lyase subfamily. Homotetramer. Pyridoxal 5'-phosphate serves as cofactor.

The catalysed reaction is L-methionine + H2O = methanethiol + 2-oxobutanoate + NH4(+). It carries out the reaction L-homocysteine + H2O = 2-oxobutanoate + hydrogen sulfide + NH4(+) + H(+). Its activity is regulated as follows. Is inhibited in vitro by carbonyl reagents, completely inactivated by DL-propargylglycine, and unaffected by metal-chelating agents. Functionally, catalyzes the alpha,gamma-elimination of L-methionine to produce methanethiol, 2-oxobutanoate and ammonia. May be responsible for the production of methanethiol associated with desirable Cheddar-type sulfur notes during cheese ripening. Is also able to catalyze the alpha,gamma-elimination of L-homocysteine and DL-selenomethionine, but has no activity toward L-cysteine, L-cystathionine, S-adenosyl-L-homocysteine and D-methionine. The sequence is that of L-methionine gamma-lyase from Brevibacterium aurantiacum.